The sequence spans 119 residues: Ribonuclease P protein component (119 aa).

Belongs to the RnpA family. As to quaternary structure, consists of a catalytic RNA component (M1 or rnpB) and a protein subunit.

It catalyses the reaction Endonucleolytic cleavage of RNA, removing 5'-extranucleotides from tRNA precursor.. Its function is as follows. RNaseP catalyzes the removal of the 5'-leader sequence from pre-tRNA to produce the mature 5'-terminus. It can also cleave other RNA substrates such as 4.5S RNA. The protein component plays an auxiliary but essential role in vivo by binding to the 5'-leader sequence and broadening the substrate specificity of the ribozyme. This is Ribonuclease P protein component from Proteus mirabilis (strain HI4320).